Consider the following 1365-residue polypeptide: Killer toxin-resistance protein 5 (1365 aa).

The first 17 residues, 1 to 17 (MRLLALVLLLLCAPLRA), serve as a signal peptide directing secretion. Asn-115, Asn-228, Asn-293, Asn-457, Asn-519, Asn-523, Asn-644, Asn-870, Asn-1091, Asn-1150, and Asn-1195 each carry an N-linked (GlcNAc...) asparagine glycan. The tract at residues 1334-1365 (FASSPGDEDVPGESVSSKYQDSDNAAPLHDEL) is disordered. The span at 1347-1356 (SVSSKYQDSD) shows a compositional bias: polar residues. The Prevents secretion from ER signature appears at 1362-1365 (HDEL).

This sequence to D.melanogaster UGGG.

The protein resides in the endoplasmic reticulum lumen. Functionally, required for (1-&gt;6)-beta-D-glucan synthesis and normal cell growth. The sequence is that of Killer toxin-resistance protein 5 (KRE5) from Saccharomyces cerevisiae (strain ATCC 204508 / S288c) (Baker's yeast).